The sequence spans 426 residues: Enolase (426 aa).

A (2R)-2-phosphoglycerate-binding site is contributed by Gln163. Glu205 serves as the catalytic Proton donor. Residues Asp242, Glu286, and Asp313 each coordinate Mg(2+). 4 residues coordinate (2R)-2-phosphoglycerate: Lys338, Arg367, Ser368, and Lys389. Lys338 (proton acceptor) is an active-site residue.

Belongs to the enolase family. It depends on Mg(2+) as a cofactor.

The protein resides in the cytoplasm. The protein localises to the secreted. It localises to the cell surface. It catalyses the reaction (2R)-2-phosphoglycerate = phosphoenolpyruvate + H2O. Its pathway is carbohydrate degradation; glycolysis; pyruvate from D-glyceraldehyde 3-phosphate: step 4/5. Catalyzes the reversible conversion of 2-phosphoglycerate (2-PG) into phosphoenolpyruvate (PEP). It is essential for the degradation of carbohydrates via glycolysis. In Helicobacter pylori (strain HPAG1), this protein is Enolase.